The primary structure comprises 458 residues: Sphingomyelinase DDB_G0288017 (458 aa).

The disordered stretch occupies residues 91-111 (NKKAKSPPPPSSLKQQNLHNN). Residue E135 participates in Mg(2+) binding. Residue H447 is the Proton acceptor of the active site.

It belongs to the neutral sphingomyelinase family. Mg(2+) serves as cofactor.

It carries out the reaction a sphingomyelin + H2O = phosphocholine + an N-acylsphing-4-enine + H(+). It participates in lipid metabolism; sphingolipid metabolism. Functionally, catalyzes the hydrolysis of sphingomyelin to form ceramide and phosphocholine. The protein is Sphingomyelinase DDB_G0288017 of Dictyostelium discoideum (Social amoeba).